A 418-amino-acid chain; its full sequence is MAPPQGSRAPLEFGGPLGAAALMLLLPVTMFHLLLVARSGPARLLGPPPYLPGPEELWSPWALLLCLTWLGLQAALYLLPARKVAEGQELKDKSRLRYPTNGFQALVLTALLVGLGVSAGLPLSALPEMLLPLAFAATLTAFIFSLLLYLKALLAPASALAPGGNSGNLIYDFFLGRELNPRICSFDFKYFCELRPGLIGWVLINLALLIQEAELRGSPSLAMWLVNGFQLLYVGDALWYEEAVLTTMDIIHDGFGFMLAFGDLAWVPFTYSLQAQFLLYHPQPLGWPLASFICLINAVGYYIFRGANSQKNTFRKNPSDPRVADLETISTATGRRLLVSGWWGMVRHPNYLGDLIMALAWSLPCGVFHLLPYFYFLYFTALLVHREDRDERQCRQKYGLAWHEYCRRVPYRIVPYVY.

The next 6 membrane-spanning stretches (helical) occupy residues 13–35 (FGGP…HLLL), 62–81 (ALLL…LLPA), 102–124 (GFQA…LPLS), 129–148 (MLLP…SLLL), 255–277 (FGFM…QAQF), and 287–304 (WPLA…YYIF). Residues lysine 311, arginine 315, leucine 338, tryptophan 343, and 350–351 (NY) each bind NADP(+). The chain crosses the membrane as a helical span at residues 355 to 377 (LIMALAWSLPCGVFHLLPYFYFL). NADP(+) is bound by residues aspartate 390, 394–398 (CRQKY), and tyrosine 405.

It belongs to the ERG4/ERG24 family. In terms of tissue distribution, highly expressed in liver and brain.

The protein resides in the microsome membrane. It localises to the endoplasmic reticulum membrane. The enzyme catalyses 4,4-dimethyl-5alpha-cholesta-8,24-dien-3beta-ol + NADP(+) = 4,4-dimethyl-5alpha-cholesta-8,14,24-trien-3beta-ol + NADPH + H(+). It carries out the reaction 5alpha-cholest-8,14-dien-3beta-ol + NADPH + H(+) = 5alpha-cholest-8-en-3beta-ol + NADP(+). The catalysed reaction is 4,4-dimethyl-8,14-cholestadien-3beta-ol + NADPH + H(+) = 4,4-dimethyl-5alpha-cholest-8-en-3beta-ol + NADP(+). Its pathway is steroid biosynthesis; cholesterol biosynthesis. In terms of biological role, catalyzes the reduction of the C14-unsaturated bond of lanosterol, as part of the metabolic pathway leading to cholesterol biosynthesis. The sequence is that of Delta(14)-sterol reductase TM7SF2 (TM7SF2) from Bos taurus (Bovine).